The chain runs to 981 residues: Little elongation complex subunit 2 (981 aa).

Residues serine 17 and serine 326 each carry the phosphoserine modification. 2 disordered regions span residues 406–427 and 475–516; these read FGATTTKPSKSPSPASTSTVAP and IDSG…SDPL. A compositionally biased stretch (low complexity) spans 408–424; sequence ATTTKPSKSPSPASTST. Basic and acidic residues predominate over residues 480–489; the sequence is EESKNKDDQR. Position 573 is a phosphoserine (serine 573). A Phosphothreonine modification is found at threonine 575. 3 disordered regions span residues 591–627, 669–690, and 930–981; these read HGKTAEVGSNLSSKPASLNSSSGQTSTGNQTNSTCPE, LMNSENSKQPPISEQPSAPSDA, and PPKS…RKIT. The span at 599–624 shows a compositional bias: low complexity; that stretch reads SNLSSKPASLNSSSGQTSTGNQTNST. Polar residues-rich tracts occupy residues 671 to 686 and 954 to 969; these read NSENSKQPPISEQPSA and NSVSVETKSLPAQQVE.

Belongs to the ICE2 family. In terms of assembly, component of the little elongation complex (LEC), at least composed of ELL (ELL, ELL2 or ELL3), ZC3H8, ICE1 and ICE2. Interacts with ICE1 (via C-terminus domain). Interacts with ELL.

Its subcellular location is the nucleus. Its function is as follows. Component of the little elongation complex (LEC), a complex required to regulate small nuclear RNA (snRNA) gene transcription by RNA polymerase II and III. The protein is Little elongation complex subunit 2 (ICE2) of Bos taurus (Bovine).